The chain runs to 757 residues: Two pore calcium channel protein 1 (757 aa).

Residues 1–94 (MRERGEMREA…NDTRFERAMR (94 aa)) are Cytoplasmic-facing. Positions 24–48 (HSHGSGSSGTGSHTSGGGGGWRGSR) are disordered. Over residues 29–45 (GSSGTGSHTSGGGGGWR) the composition is skewed to gly residues. Residues 95–115 (FYFVYLRLDWLWSLNLFALIL) traverse the membrane as a helical segment. The Extracellular portion of the chain corresponds to 116 to 152 (LNFLEKPLWCRGYSQHACDQRDLYFLGQLPYLSKTES). Residues 153–173 (LIYEGLTLVILVMDIFYPLSY) form a helical membrane-spanning segment. The Cytoplasmic segment spans residues 174-188 (EGLNLFWKNTINKLK). Residues 189 to 209 (VLLLFILACDILVFAFSPQPF) form a helical membrane-spanning segment. Arg210 is a topological domain (extracellular). A helical; Voltage-sensor membrane pass occupies residues 211 to 228 (VAPYIRVAFLIMNIRELR). The Cytoplasmic segment spans residues 229 to 233 (MCAVT). Residues 234–254 (LVGMVGTYLNVLALSLLFLLF) traverse the membrane as a helical segment. Residues 255–270 (ASWLAYVTFEDTPQGK) are Extracellular-facing. Positions 271 to 285 (TVFSSYGTTLYQMFI) form an intramembrane region, pore-forming. Over 286–308 (LFTTSNNPDVWVPAYKSSRWSSL) the chain is Extracellular. Residues 309–329 (FFIVYVLLGVYFLTNLILAVI) form a helical membrane-spanning segment. The Cytoplasmic portion of the chain corresponds to 330-453 (YDSFKEQLAK…LCEWLKSFVR (124 aa)). EF-hand domains are found at residues 347-382 (TRKS…LNKY) and 388-423 (TSRE…IAIK). The chain crosses the membrane as a helical span at residues 454–474 (SPLFEYIVIFVLLMNLVAVII). Residues 475–493 (ETTLDIENSSSQKVWQEVE) lie on the Extracellular side of the membrane. A glycan (N-linked (GlcNAc...) asparagine) is linked at Asn482. Residues 494–514 (FVFGWIYVIEMALKIFSLGFG) form a helical membrane-spanning segment. Residues 515–523 (AYWMEGQNK) lie on the Cytoplasmic side of the membrane. Residues 524–544 (FDFVLTWTIFIGETLTFAFPS) form a helical membrane-spanning segment. Topologically, residues 545-553 (KLSFLSNGE) are extracellular. Residues 554–571 (WIRYLLLGRMLRLTRILL) form a helical; Voltage-sensor membrane-spanning segment. The Cytoplasmic segment spans residues 572 to 595 (QVRRFRAFVATFFTLMSSLMPYLG). A helical membrane pass occupies residues 596 to 616 (IVFCTLCIYCSLGLQIFGGIV). Topologically, residues 617 to 640 (YAGNPTLEETDLFSNDYLLFNFND) are extracellular. The pore-forming intramembrane region spans 641 to 655 (YPSGMVTLFNLLVMG). Residues 656–676 (NWQAWMESYRQLTGSYWSLIY) are Extracellular-facing. A helical transmembrane segment spans residues 677–697 (FVSFYLISVLLLLNLIVAFVL). Residues 698–757 (EAFFAEMELEKDGEADIQDPTLEGRNRRRSVRVRTKGTMVDILLHHMLSNELDGSQNRDQ) are Cytoplasmic-facing.

This sequence belongs to the calcium channel alpha-1 subunit (TC 1.A.1.11) family. Two pore calcium channel subfamily. Homodimer. In terms of tissue distribution, expressed in shoot, mature leaf, cultured cells, and at lower level in roots.

The protein localises to the membrane. With respect to regulation, inhibited by the VDCC blocker verapamil in yeast cells. Channel activity may be down-regulated by cytosolic Ca(2+) in rice cells. Inhibited by Al(3+). Functionally, may function as one of the major voltage-gated Ca(2+) channel (VDCC) across the plasma membrane. May be involved in the regulation of cytosolic Ca(2+) and in growth and development. Acts as the major ROS-responsive Ca(2+) channel and is the possible target of Al-dependent inhibition. Determines sensitivity to T.viride xylanase elicitor. Plays a regulatory role in elicitor-induced defense responses and hypersensitive cell death. In Oryza sativa subsp. japonica (Rice), this protein is Two pore calcium channel protein 1 (TPC1).